We begin with the raw amino-acid sequence, 119 residues long: Phytosulfokines 2 (119 aa).

Residues 1-34 (MSTTRGVSSSSAAAALALLLLFALCFFSFHFAAA) form the signal peptide. The propeptide occupies 35–109 (ARAVPRDEHQ…RRLLSDAHLD (75 aa)). Tyr110 and Tyr112 each carry sulfotyrosine. Positions 115 to 119 (HKNKP) are excised as a propeptide.

It belongs to the phytosulfokine family. In terms of processing, sulfation is important for activity and for the binding to a putative membrane receptor. PSK-alpha is produced by endopeptidase digestion. PSK-beta is produced from PSK-alpha by exopeptidase digestion.

Its subcellular location is the secreted. Functionally, promotes plant cell differentiation, organogenesis and somatic embryogenesis as well as cell proliferation. In Oryza sativa subsp. japonica (Rice), this protein is Phytosulfokines 2 (PSK2).